A 568-amino-acid polypeptide reads, in one-letter code: Zinc finger protein 76 (568 aa).

Lys24 is covalently cross-linked (Glycyl lysine isopeptide (Lys-Gly) (interchain with G-Cter in SUMO2)). 3 consecutive repeat copies span residues 34–45, 62–73, and 88–99. The interval 34–99 is 3 X 12 AA approximate repeats; that stretch reads IQLEDGTTAY…LEDGSTAYIH (66 aa). 7 consecutive C2H2-type zinc fingers follow at residues 165-189, 195-219, 225-249, 255-279, 285-309, 315-339, and 345-368; these read FRCG…ERAH, YRCD…VRTH, YKCP…VRTH, FRCP…VRTH, YTCP…VRIH, YVCT…HVVH, and YTCS…RSAH. Residues 365–401 form a disordered region; sequence RSAHGELEATEESEQALYEQQQLEAASAAEESPSPKP. Over residues 379-396 the composition is skewed to low complexity; it reads QALYEQQQLEAASAAEES.

It belongs to the krueppel C2H2-type zinc-finger protein family.

The protein localises to the nucleus. In terms of biological role, may be involved in transcriptional regulation. This is Zinc finger protein 76 (Znf76) from Rattus norvegicus (Rat).